Reading from the N-terminus, the 545-residue chain is ATP synthase subunit alpha (545 aa).

ATP is bound at residue 173 to 180 (GDRQTGKT).

Belongs to the ATPase alpha/beta chains family. In terms of assembly, F-type ATPases have 2 components, CF(1) - the catalytic core - and CF(0) - the membrane proton channel. CF(1) has five subunits: alpha(3), beta(3), gamma(1), delta(1), epsilon(1). CF(0) has three main subunits: a(1), b(2) and c(9-12). The alpha and beta chains form an alternating ring which encloses part of the gamma chain. CF(1) is attached to CF(0) by a central stalk formed by the gamma and epsilon chains, while a peripheral stalk is formed by the delta and b chains.

The protein resides in the cell membrane. The catalysed reaction is ATP + H2O + 4 H(+)(in) = ADP + phosphate + 5 H(+)(out). Functionally, produces ATP from ADP in the presence of a proton gradient across the membrane. The alpha chain is a regulatory subunit. This Leifsonia xyli subsp. xyli (strain CTCB07) protein is ATP synthase subunit alpha.